The primary structure comprises 88 residues: Translation initiation factor IF-1 1 (88 aa).

Residues M1 to P72 enclose the S1-like domain. Residues R66–R88 form a disordered region.

This sequence belongs to the IF-1 family. In terms of assembly, component of the 30S ribosomal translation pre-initiation complex which assembles on the 30S ribosome in the order IF-2 and IF-3, IF-1 and N-formylmethionyl-tRNA(fMet); mRNA recruitment can occur at any time during PIC assembly.

Its subcellular location is the cytoplasm. In terms of biological role, one of the essential components for the initiation of protein synthesis. Stabilizes the binding of IF-2 and IF-3 on the 30S subunit to which N-formylmethionyl-tRNA(fMet) subsequently binds. Helps modulate mRNA selection, yielding the 30S pre-initiation complex (PIC). Upon addition of the 50S ribosomal subunit IF-1, IF-2 and IF-3 are released leaving the mature 70S translation initiation complex. The sequence is that of Translation initiation factor IF-1 1 from Chromobacterium violaceum (strain ATCC 12472 / DSM 30191 / JCM 1249 / CCUG 213 / NBRC 12614 / NCIMB 9131 / NCTC 9757 / MK).